Consider the following 261-residue polypeptide: 3-methyl-2-oxobutanoate hydroxymethyltransferase (261 aa).

2 residues coordinate Mg(2+): Asp44 and Asp83. Residues Asp44 to Ser45, Asp83, and Lys112 each bind 3-methyl-2-oxobutanoate. Glu114 serves as a coordination point for Mg(2+). Glu181 serves as the catalytic Proton acceptor.

This sequence belongs to the PanB family. Homodecamer; pentamer of dimers. Requires Mg(2+) as cofactor.

The protein resides in the cytoplasm. The catalysed reaction is 3-methyl-2-oxobutanoate + (6R)-5,10-methylene-5,6,7,8-tetrahydrofolate + H2O = 2-dehydropantoate + (6S)-5,6,7,8-tetrahydrofolate. Its pathway is cofactor biosynthesis; (R)-pantothenate biosynthesis; (R)-pantoate from 3-methyl-2-oxobutanoate: step 1/2. Catalyzes the reversible reaction in which hydroxymethyl group from 5,10-methylenetetrahydrofolate is transferred onto alpha-ketoisovalerate to form ketopantoate. The chain is 3-methyl-2-oxobutanoate hydroxymethyltransferase from Acidithiobacillus ferrooxidans (strain ATCC 23270 / DSM 14882 / CIP 104768 / NCIMB 8455) (Ferrobacillus ferrooxidans (strain ATCC 23270)).